Reading from the N-terminus, the 299-residue chain is Exosome complex component rrp42 (299 aa).

It belongs to the RNase PH family. Component of the RNA exosome complex. Specifically part of the catalytically inactive RNA exosome core complex (Exo-9) which may associate with the catalytic subunits rrp6 and dis3 in cytoplasmic- and nuclear-specific RNA exosome complex forms. Exo-9 is formed by a hexameric base ring of RNase PH domain-containing subunits and a cap ring consisting of csl4, rrp4 and rrp40.

Its subcellular location is the cytoplasm. The protein localises to the nucleus. The protein resides in the nucleolus. In terms of biological role, non-catalytic component of the RNA exosome complex which has 3'-&gt;5' exoribonuclease activity and participates in a multitude of cellular RNA processing and degradation events. In the nucleus, the RNA exosome complex is involved in proper maturation of stable RNA species such as rRNA, snRNA and snoRNA, in the elimination of RNA processing by-products and non-coding 'pervasive' transcripts, such as antisense RNA species and cryptic unstable transcripts (CUTs), and of mRNAs with processing defects, thereby limiting or excluding their export to the cytoplasm. In the cytoplasm, the RNA exosome complex is involved in general mRNA turnover and in RNA surveillance pathways, preventing translation of aberrant mRNAs. The catalytic inactive RNA exosome core complex of 9 subunits (Exo-9) is proposed to play a pivotal role in the binding and presentation of RNA for ribonucleolysis, and to serve as a scaffold for the association with catalytic subunits and accessory proteins or complexes. ski6 is part of the hexameric ring of RNase PH domain-containing subunits proposed to form a central channel which threads RNA substrates for degradation. In Schizosaccharomyces pombe (strain 972 / ATCC 24843) (Fission yeast), this protein is Exosome complex component rrp42 (rrp42).